Consider the following 276-residue polypeptide: Merozoite surface protein 2 (276 aa).

The N-terminal stretch at 1–20 (MKVIKTLSIINFFIFVTFNI) is a signal peptide. N22 and N36 each carry an N-linked (GlcNAc...) asparagine glycan. The segment at 44 to 202 (AESNPSTGAG…EQTESPELQS (159 aa)) is polymorphic region. A disordered region spans residues 44 to 242 (AESNPSTGAG…CTDGNKENCG (199 aa)). Positions 51–90 (GAGGSGSAGGSGSAGGSGSAGGSGSAGGSGSAGSGDGNGA) are enriched in gly residues. A run of 5 repeats spans residues 53-58 (GGSGSA), 59-64 (GGSGSA), 65-70 (GGSGSA), 71-76 (GGSGSA), and 77-82 (GGSGSA). A 5 X 6 AA tandem repeats of G-G-S-G-S-A region spans residues 53–82 (GGSGSAGGSGSAGGSGSAGGSGSAGGSGSA). The segment covering 91-127 (NPGADAERSPSTPATTTTTTTTNDAEASTSTSSENPN) has biased composition (low complexity). Polar residues-rich tracts occupy residues 143 to 169 (KPNQ…NVPP), 176 to 187 (KSPTAQPEQAEN), and 194 to 204 (QTESPELQSAP). A glycan (N-linked (GlcNAc...) asparagine) is linked at N153. A glycan (N-linked (GlcNAc...) asparagine) is linked at N225. Over residues 229–238 (SQKECTDGNK) the composition is skewed to basic and acidic residues. A disulfide bond links C233 and C241. Residue N250 is glycosylated (N-linked (GlcNAc...) asparagine). N250 is lipidated: GPI-anchor amidated asparagine. Residues 251-276 (SSNIASINKFVVLISATLVLSFAIFI) constitute a propeptide, removed in mature form.

It localises to the cell membrane. Functionally, may play a role in the merozoite attachment to the erythrocyte. This Plasmodium falciparum (isolate 7G8) protein is Merozoite surface protein 2.